The sequence spans 161 residues: uncharacterized protein (161 aa).

This is an uncharacterized protein from Archaeoglobus fulgidus (strain ATCC 49558 / DSM 4304 / JCM 9628 / NBRC 100126 / VC-16).